The chain runs to 375 residues: Pectate lyase 1 (375 aa).

The signal sequence occupies residues 1-21 (MASCTLLAVLVFLCAIVSCFS). Cysteine 28 and cysteine 45 form a disulfide bridge. Asparagine 110 carries N-linked (GlcNAc...) asparagine glycosylation. Cysteine 128 and cysteine 147 form a disulfide bridge. N-linked (GlcNAc...) asparagine glycosylation occurs at asparagine 148. Aspartate 170 provides a ligand contact to Ca(2+). An N-linked (GlcNAc...) asparagine glycan is attached at asparagine 178. Residues aspartate 194 and aspartate 198 each coordinate Ca(2+). Arginine 250 is a catalytic residue. N-linked (GlcNAc...) asparagine glycosylation occurs at asparagine 293. Cysteine 306 and cysteine 312 are joined by a disulfide. N-linked (GlcNAc...) asparagine glycosylation is present at asparagine 352.

This sequence belongs to the polysaccharide lyase 1 family. Amb a subfamily. It depends on Ca(2+) as a cofactor.

The catalysed reaction is Eliminative cleavage of (1-&gt;4)-alpha-D-galacturonan to give oligosaccharides with 4-deoxy-alpha-D-galact-4-enuronosyl groups at their non-reducing ends.. It functions in the pathway glycan metabolism; pectin degradation; 2-dehydro-3-deoxy-D-gluconate from pectin: step 2/5. Functionally, has pectate lyase activity. The sequence is that of Pectate lyase 1 from Chamaecyparis obtusa (Hinoki false-cypress).